Reading from the N-terminus, the 55-residue chain is ATP synthase F(0) complex subunit 8 (55 aa).

The helical transmembrane segment at 7–24 (APWFSIMIMTWLTLALLI) threads the bilayer. A disordered region spans residues 34–55 (TNPPSSKPSLTTKPTPWAWPWT).

This sequence belongs to the ATPase protein 8 family. Component of the ATP synthase complex composed at least of ATP5F1A/subunit alpha, ATP5F1B/subunit beta, ATP5MC1/subunit c (homooctomer), MT-ATP6/subunit a, MT-ATP8/subunit 8, ATP5ME/subunit e, ATP5MF/subunit f, ATP5MG/subunit g, ATP5MK/subunit k, ATP5MJ/subunit j, ATP5F1C/subunit gamma, ATP5F1D/subunit delta, ATP5F1E/subunit epsilon, ATP5PF/subunit F6, ATP5PB/subunit b, ATP5PD/subunit d, ATP5PO/subunit OSCP. ATP synthase complex consists of a soluble F(1) head domain (subunits alpha(3) and beta(3)) - the catalytic core - and a membrane F(0) domain - the membrane proton channel (subunits c, a, 8, e, f, g, k and j). These two domains are linked by a central stalk (subunits gamma, delta, and epsilon) rotating inside the F1 region and a stationary peripheral stalk (subunits F6, b, d, and OSCP).

It is found in the mitochondrion membrane. Its function is as follows. Subunit 8, of the mitochondrial membrane ATP synthase complex (F(1)F(0) ATP synthase or Complex V) that produces ATP from ADP in the presence of a proton gradient across the membrane which is generated by electron transport complexes of the respiratory chain. ATP synthase complex consist of a soluble F(1) head domain - the catalytic core - and a membrane F(1) domain - the membrane proton channel. These two domains are linked by a central stalk rotating inside the F(1) region and a stationary peripheral stalk. During catalysis, ATP synthesis in the catalytic domain of F(1) is coupled via a rotary mechanism of the central stalk subunits to proton translocation. In vivo, can only synthesize ATP although its ATP hydrolase activity can be activated artificially in vitro. Part of the complex F(0) domain. This is ATP synthase F(0) complex subunit 8 from Aythya americana (Redhead).